A 517-amino-acid chain; its full sequence is Nicotine N-demethylase CYP82E4 (517 aa).

Residues 2–22 (VFPIEAIVGLVTFTFLFFFLW) form a helical membrane-spanning segment. A Glycyl lysine isopeptide (Lys-Gly) (interchain with G-Cter in ubiquitin) cross-link involves residue K254. C457 is a heme binding site.

The protein belongs to the cytochrome P450 family. CYP82E2 subfamily. Heme serves as cofactor. Expressed at low levels in green leaves.

Its subcellular location is the membrane. The enzyme catalyses (S)-nicotine + reduced [NADPH--hemoprotein reductase] + O2 = (S)-nornicotine + formaldehyde + oxidized [NADPH--hemoprotein reductase] + H2O + H(+). It functions in the pathway alkaloid biosynthesis; nicotine biosynthesis. In terms of biological role, involved in the biosynthesis of pyridine alkaloid natural products, leading mainly to the production of anabasine, anatabine, nicotine and nornicotine, effective deterrents against herbivores with antiparasitic and pesticide properties (neurotoxins); nornicotine serves as the precursor in the synthesis of the carcinogen compound N'-nitrosonornicotine (NNN). Catalyzes the demethylation of nicotine to form nornicotine. The chain is Nicotine N-demethylase CYP82E4 from Nicotiana tabacum (Common tobacco).